A 95-amino-acid polypeptide reads, in one-letter code: Aspartyl/glutamyl-tRNA(Asn/Gln) amidotransferase subunit C (95 aa).

Belongs to the GatC family. As to quaternary structure, heterotrimer of A, B and C subunits.

It carries out the reaction L-glutamyl-tRNA(Gln) + L-glutamine + ATP + H2O = L-glutaminyl-tRNA(Gln) + L-glutamate + ADP + phosphate + H(+). The enzyme catalyses L-aspartyl-tRNA(Asn) + L-glutamine + ATP + H2O = L-asparaginyl-tRNA(Asn) + L-glutamate + ADP + phosphate + 2 H(+). Allows the formation of correctly charged Asn-tRNA(Asn) or Gln-tRNA(Gln) through the transamidation of misacylated Asp-tRNA(Asn) or Glu-tRNA(Gln) in organisms which lack either or both of asparaginyl-tRNA or glutaminyl-tRNA synthetases. The reaction takes place in the presence of glutamine and ATP through an activated phospho-Asp-tRNA(Asn) or phospho-Glu-tRNA(Gln). This chain is Aspartyl/glutamyl-tRNA(Asn/Gln) amidotransferase subunit C, found in Prochlorococcus marinus (strain NATL2A).